The following is a 240-amino-acid chain: 2,3,4,5-tetrahydropyridine-2,6-dicarboxylate N-acetyltransferase (240 aa).

The protein belongs to the transferase hexapeptide repeat family. DapH subfamily.

It carries out the reaction (S)-2,3,4,5-tetrahydrodipicolinate + acetyl-CoA + H2O = L-2-acetamido-6-oxoheptanedioate + CoA. The protein operates within amino-acid biosynthesis; L-lysine biosynthesis via DAP pathway; LL-2,6-diaminopimelate from (S)-tetrahydrodipicolinate (acetylase route): step 1/3. Its function is as follows. Catalyzes the transfer of an acetyl group from acetyl-CoA to tetrahydrodipicolinate. The polypeptide is 2,3,4,5-tetrahydropyridine-2,6-dicarboxylate N-acetyltransferase (Halalkalibacterium halodurans (strain ATCC BAA-125 / DSM 18197 / FERM 7344 / JCM 9153 / C-125) (Bacillus halodurans)).